The following is a 430-amino-acid chain: MLDPNLLRNELDAVAEKLARRGYKLDVDTLRQQEERRKVLQVETESLQAERNSRSKSIGAAKARGEDIEPLRREVNELGEKLDAAKAELDRLQQEIRDLALSIPNLPDDSVPVGRDENDNQEICRWGEPRSYNFDVRDHVTLGEMAEGLDFAAAVKLTGARFVVMKGQIARMHRALAQFMLDLHTEQHGYLETYVPYLVNHDTLYGTGQLPKFGADLFHTRPLEEEADSSIYALIPTAEVPVTNLVRGEILEESALPLKMTAHTPCFRSEAGSYGRDTRGLIRMHQFDKVELVQIVRPEDSMAALEELTAHAEKVLQLLNLPYRKVLLCTGDMGFGSSKTYDLEVWVPAQNTYREISSCSNMWDFQARRMQARYRSKDDKKPRLVHTLNGSGLAVGRTLVAVMENYQQADGRIQVPEALRPYMNGLEYIG.

The disordered stretch occupies residues 44-65; sequence TESLQAERNSRSKSIGAAKARG. Residue 237–239 coordinates L-serine; sequence TAE. Residue 268–270 coordinates ATP; that stretch reads RSE. Glutamate 291 contributes to the L-serine binding site. 355–358 contributes to the ATP binding site; the sequence is EISS. Serine 391 is a binding site for L-serine.

Belongs to the class-II aminoacyl-tRNA synthetase family. Type-1 seryl-tRNA synthetase subfamily. In terms of assembly, homodimer. The tRNA molecule binds across the dimer.

Its subcellular location is the cytoplasm. The enzyme catalyses tRNA(Ser) + L-serine + ATP = L-seryl-tRNA(Ser) + AMP + diphosphate + H(+). It catalyses the reaction tRNA(Sec) + L-serine + ATP = L-seryl-tRNA(Sec) + AMP + diphosphate + H(+). It participates in aminoacyl-tRNA biosynthesis; selenocysteinyl-tRNA(Sec) biosynthesis; L-seryl-tRNA(Sec) from L-serine and tRNA(Sec): step 1/1. Catalyzes the attachment of serine to tRNA(Ser). Is also able to aminoacylate tRNA(Sec) with serine, to form the misacylated tRNA L-seryl-tRNA(Sec), which will be further converted into selenocysteinyl-tRNA(Sec). The polypeptide is Serine--tRNA ligase (Edwardsiella ictaluri (strain 93-146)).